A 103-amino-acid chain; its full sequence is NADH-quinone oxidoreductase subunit K (103 aa).

A run of 3 helical transmembrane segments spans residues 7-27 (TEHG…GVLV), 31-51 (LIFM…AFIV), and 65-85 (FMLI…LILL).

It belongs to the complex I subunit 4L family. As to quaternary structure, NDH-1 is composed of 14 different subunits. Subunits NuoA, H, J, K, L, M, N constitute the membrane sector of the complex.

Its subcellular location is the cell inner membrane. It catalyses the reaction a quinone + NADH + 5 H(+)(in) = a quinol + NAD(+) + 4 H(+)(out). Functionally, NDH-1 shuttles electrons from NADH, via FMN and iron-sulfur (Fe-S) centers, to quinones in the respiratory chain. The immediate electron acceptor for the enzyme in this species is believed to be ubiquinone. Couples the redox reaction to proton translocation (for every two electrons transferred, four hydrogen ions are translocated across the cytoplasmic membrane), and thus conserves the redox energy in a proton gradient. This chain is NADH-quinone oxidoreductase subunit K, found in Nitrosococcus oceani (strain ATCC 19707 / BCRC 17464 / JCM 30415 / NCIMB 11848 / C-107).